A 370-amino-acid chain; its full sequence is L-selectin (370 aa).

A signal peptide spans Met-1 to Cys-28. Positions Asp-29–Cys-38 are excised as a propeptide. Topologically, residues Trp-39 to Pro-333 are extracellular. In terms of domain architecture, C-type lectin spans Ala-55–Cys-155. Disulfide bonds link Cys-57-Cys-155, Cys-128-Cys-147, Cys-128-Cys-160, Cys-160-Cys-171, Cys-165-Cys-180, Cys-182-Cys-191, Cys-197-Cys-241, Cys-227-Cys-254, Cys-259-Cys-303, and Cys-289-Cys-316. N-linked (GlcNAc...) asparagine glycosylation is found at Asn-60, Asn-77, and Asn-104. Ca(2+) is bound by residues Glu-118, Asn-120, Glu-126, Asn-143, and Asp-144. The region spanning Tyr-156 to Gln-192 is the EGF-like domain. Residue Asn-177 is glycosylated (N-linked (GlcNAc...) asparagine). Sushi domains are found at residues Thr-195–Val-256 and Ile-257–Lys-318. Residues Asn-216, Asn-226, and Asn-246 are each glycosylated (N-linked (GlcNAc...) asparagine). N-linked (GlcNAc...) asparagine glycosylation is found at Asn-308 and Asn-320. A helical transmembrane segment spans residues Leu-334 to Leu-354. Residues Ala-355–Gly-370 are Cytoplasmic-facing.

This sequence belongs to the selectin/LECAM family. As to quaternary structure, interaction with SELPLG/PSGL1 and PODXL2 is required for promoting recruitment and rolling of leukocytes. This interaction is dependent on the sialyl Lewis X glycan modification of SELPLG and PODXL2, and tyrosine sulfation modifications of SELPLG. Sulfation on 'Tyr-51' of SELPLG is important for L-selectin binding. In terms of processing, N-glycosylated. In terms of tissue distribution, highly expressed in lymphocytes from peripheral lymph nodes. Low in lymphocytes isolated from Peyer patches.

Its subcellular location is the cell membrane. In terms of biological role, calcium-dependent lectin that mediates cell adhesion by binding to glycoproteins on neighboring cells. Mediates the adherence of lymphocytes to endothelial cells of high endothelial venules in peripheral lymph nodes. Promotes initial tethering and rolling of leukocytes in endothelia. This Bos taurus (Bovine) protein is L-selectin (SELL).